The chain runs to 280 residues: Tobamovirus multiplication protein 2A (280 aa).

At 1 to 13 the chain is on the cytoplasmic side; the sequence is MACRGCLECLLKL. Residues 14-34 form a helical membrane-spanning segment; it reads LNFLLAVAGLGMIGYGIYLFV. At 35-78 the chain is on the extracellular side; it reads EYKRVTDNSVTFDLTNGDQSYVSFGRPILMAVSLSSNIFDNLPK. The chain crosses the membrane as a helical span at residues 79–99; it reads AWFIYLFIGIGVALFVISCCG. Over 100-113 the chain is Cytoplasmic; the sequence is CVGTCSRSVCCLSC. Residues 114–134 traverse the membrane as a helical segment; sequence YSLLLILLILVELGFAAFIFF. Residues 135–162 lie on the Extracellular side of the membrane; that stretch reads DNSWRDELPSDRTGNFDTIYNFLRENWK. The helical transmembrane segment at 163-183 threads the bilayer; that stretch reads IVRWVALGAVVFEALLFLLAL. At 184-280 the chain is on the cytoplasmic side; it reads MVRAANTPAE…NEEKGRCTIM (97 aa). Residues Ser-196 and Ser-233 each carry the phosphoserine modification. A disordered region spans residues 258-280; the sequence is SESHRFQQMPAQPNEEKGRCTIM. The span at 271 to 280 shows a compositional bias: basic and acidic residues; that stretch reads NEEKGRCTIM.

The protein belongs to the tetraspanin (TM4SF) family. In terms of assembly, homodimer. Constituent of tobamovirus replication complex. Interacts with TOM1. In terms of tissue distribution, expressed in rosette leaves.

Its subcellular location is the vacuole membrane. Functionally, necessary for the efficient intracellular multiplication of tobamoviruses, being a component of the replication complex. The polypeptide is Tobamovirus multiplication protein 2A (TOM2A) (Arabidopsis thaliana (Mouse-ear cress)).